A 305-amino-acid chain; its full sequence is Glutaminase (305 aa).

Positions 61, 113, 158, 165, 189, 241, and 259 each coordinate substrate.

The protein belongs to the glutaminase family. As to quaternary structure, homotetramer.

It carries out the reaction L-glutamine + H2O = L-glutamate + NH4(+). The sequence is that of Glutaminase from Clostridium botulinum (strain Loch Maree / Type A3).